The sequence spans 356 residues: Replication factor C subunit 3 (356 aa).

At lysine 20 the chain carries N6-acetyllysine. Position 125 is a phosphoserine (serine 125).

It belongs to the activator 1 small subunits family. In terms of assembly, subunit of the RFC complex, an heteropentameric complex consisting of a large subunit RFC1 and four small subunits RFC2, RFC3, RFC4 and RFC5; the RFC complex interacts with PCNA. Forms an heterotetrameric complex with RFC2, RFC4 and RFC5; this complex has ATPase activity but is not stimulated by PCNA. The heterotetramer of subunits RFC2, RFC3, RFC4 and RFC5 interacts with RAD17. Interacts with CNTD1; this interaction facilitates crossover formation.

The protein resides in the nucleus. Subunit of the replication factor C (RFC) complex which acts during elongation of primed DNA templates by DNA polymerases delta and epsilon, and is necessary for ATP-dependent loading of proliferating cell nuclear antigen (PCNA) onto primed DNA. This is Replication factor C subunit 3 (RFC3) from Homo sapiens (Human).